Reading from the N-terminus, the 118-residue chain is UPF0342 protein Hore_03100 (118 aa).

This sequence belongs to the UPF0342 family.

This is UPF0342 protein Hore_03100 from Halothermothrix orenii (strain H 168 / OCM 544 / DSM 9562).